A 138-amino-acid polypeptide reads, in one-letter code: Translation initiation factor 2 subunit beta (138 aa).

Belongs to the eIF-2-beta/eIF-5 family. In terms of assembly, heterotrimer composed of an alpha, a beta and a gamma chain.

Functionally, eIF-2 functions in the early steps of protein synthesis by forming a ternary complex with GTP and initiator tRNA. The protein is Translation initiation factor 2 subunit beta of Methanococcus vannielii (strain ATCC 35089 / DSM 1224 / JCM 13029 / OCM 148 / SB).